Here is a 467-residue protein sequence, read N- to C-terminus: UDP-N-acetylmuramoylalanine--D-glutamate ligase (467 aa).

Residue 121-127 coordinates ATP; sequence GTNGKST.

The protein belongs to the MurCDEF family.

The protein localises to the cytoplasm. It carries out the reaction UDP-N-acetyl-alpha-D-muramoyl-L-alanine + D-glutamate + ATP = UDP-N-acetyl-alpha-D-muramoyl-L-alanyl-D-glutamate + ADP + phosphate + H(+). It functions in the pathway cell wall biogenesis; peptidoglycan biosynthesis. Cell wall formation. Catalyzes the addition of glutamate to the nucleotide precursor UDP-N-acetylmuramoyl-L-alanine (UMA). The polypeptide is UDP-N-acetylmuramoylalanine--D-glutamate ligase (Chelativorans sp. (strain BNC1)).